A 176-amino-acid chain; its full sequence is NAD(P)H-quinone oxidoreductase subunit J (176 aa).

Positions 1–32 are disordered; the sequence is MEKEGLAKSSDTSIKKEGFISQSLSKDGIPNQ. Positions 20–32 are enriched in polar residues; the sequence is ISQSLSKDGIPNQ.

Belongs to the complex I 30 kDa subunit family. In terms of assembly, NDH-1 can be composed of about 15 different subunits; different subcomplexes with different compositions have been identified which probably have different functions.

It localises to the cellular thylakoid membrane. The enzyme catalyses a plastoquinone + NADH + (n+1) H(+)(in) = a plastoquinol + NAD(+) + n H(+)(out). It carries out the reaction a plastoquinone + NADPH + (n+1) H(+)(in) = a plastoquinol + NADP(+) + n H(+)(out). Functionally, NDH-1 shuttles electrons from an unknown electron donor, via FMN and iron-sulfur (Fe-S) centers, to quinones in the respiratory and/or the photosynthetic chain. The immediate electron acceptor for the enzyme in this species is believed to be plastoquinone. Couples the redox reaction to proton translocation, and thus conserves the redox energy in a proton gradient. Cyanobacterial NDH-1 also plays a role in inorganic carbon-concentration. This Prochlorococcus marinus (strain MIT 9215) protein is NAD(P)H-quinone oxidoreductase subunit J.